We begin with the raw amino-acid sequence, 110 residues long: CVVLVMCMVVIAPMAEGAISCGAVTSDLSPCLTYLTGGPGPSPQCCGGVKKLLAAANTTPDRQAACNCLKSAAGSITKLNTNNAAALPGKCGVNIPYKISTSTNCNTVKF.

Positions 1–17 are cleaved as a signal peptide; the sequence is CVVLVMCMVVIAPMAEG. 4 cysteine pairs are disulfide-bonded: Cys-21/Cys-68, Cys-31/Cys-45, Cys-46/Cys-91, and Cys-66/Cys-105.

This sequence belongs to the plant LTP family.

In terms of biological role, plant non-specific lipid-transfer proteins transfer phospholipids as well as galactolipids across membranes. May play a role in wax or cutin deposition in the cell walls of expanding epidermal cells and certain secretory tissues. The protein is Non-specific lipid-transfer protein 4 of Lens culinaris (Lentil).